The sequence spans 382 residues: Gibberellin 2-beta-dioxygenase 1 (382 aa).

The Fe2OG dioxygenase domain occupies 189-321; it reads DSDCLLRINH…RLSTIYFASP (133 aa). 2-oxoglutarate is bound at residue Tyr199. His241, Asp243, and His302 together coordinate Fe cation. The 2-oxoglutarate site is built by Arg312 and Ser314.

The protein belongs to the iron/ascorbate-dependent oxidoreductase family. GA2OX subfamily. L-ascorbate is required as a cofactor. Fe(2+) serves as cofactor. Expressed in roots, shoot apex, and in the basal region of leaf primordia and young leaves.

It carries out the reaction gibberellin A1 + 2-oxoglutarate + O2 = gibberellin A8 + succinate + CO2. Its function is as follows. Catalyzes the 2-beta-hydroxylation of several biologically active gibberellins, leading to the homeostatic regulation of their endogenous level. Catabolism of gibberellins (GAs) plays a central role in plant development. Controls the level of bioactive GAs in the shoot apical meristem, which regulates the vegetative to reproductive phase transition. In vitro, converts GA1, GA4, GA9, GA20, and GA44 to the corresponding 2-beta-hydroxylated products GA8, GA34, GA51, GA29, and GA98, respectively. The sequence is that of Gibberellin 2-beta-dioxygenase 1 from Oryza sativa subsp. japonica (Rice).